A 734-amino-acid chain; its full sequence is Photosystem I P700 chlorophyll a apoprotein A2 (734 aa).

8 helical membrane passes run 46–69, 135–158, 175–199, 273–291, 330–353, 369–395, 417–439, and 517–535; these read IFAS…FHVA, LYTG…LHLQ, LNHH…HVAI, MAHH…GHMY, LHFQ…QHMY, AASY…IFFI, AIIS…LYVH, and FLVH…LILV. Positions 559 and 568 each coordinate [4Fe-4S] cluster. Transmembrane regions (helical) follow at residues 575-596 and 643-665; these read AFYL…YWHW and LSVW…MFLI. Chlorophyll a is bound by residues H654, M662, and Y670. Position 671 (W671) interacts with phylloquinone. The chain crosses the membrane as a helical span at residues 707 to 727; sequence LVGLAHFSVGYIFTYAAFLIA.

Belongs to the PsaA/PsaB family. As to quaternary structure, the PsaA/B heterodimer binds the P700 chlorophyll special pair and subsequent electron acceptors. PSI consists of a core antenna complex that captures photons, and an electron transfer chain that converts photonic excitation into a charge separation. The eukaryotic PSI reaction center is composed of at least 11 subunits. The cofactor is P700 is a chlorophyll a/chlorophyll a' dimer, A0 is one or more chlorophyll a, A1 is one or both phylloquinones and FX is a shared 4Fe-4S iron-sulfur center..

The protein localises to the plastid. Its subcellular location is the chloroplast thylakoid membrane. The enzyme catalyses reduced [plastocyanin] + hnu + oxidized [2Fe-2S]-[ferredoxin] = oxidized [plastocyanin] + reduced [2Fe-2S]-[ferredoxin]. PsaA and PsaB bind P700, the primary electron donor of photosystem I (PSI), as well as the electron acceptors A0, A1 and FX. PSI is a plastocyanin-ferredoxin oxidoreductase, converting photonic excitation into a charge separation, which transfers an electron from the donor P700 chlorophyll pair to the spectroscopically characterized acceptors A0, A1, FX, FA and FB in turn. Oxidized P700 is reduced on the lumenal side of the thylakoid membrane by plastocyanin. The sequence is that of Photosystem I P700 chlorophyll a apoprotein A2 from Acorus calamus (Sweet flag).